The primary structure comprises 401 residues: Golgi membrane protein 1 (401 aa).

Met1 bears the N-acetylmethionine mark. Over 1 to 12 (MMGLGNGRRSMK) the chain is Cytoplasmic. A helical; Signal-anchor for type II membrane protein membrane pass occupies residues 13–35 (SPPLVLAALVACIIVLGFNYWIA). Topologically, residues 36-401 (SSRSVDLQTR…DQREKRNHTL (366 aa)) are lumenal. A coiled-coil region spans residues 40 to 205 (VDLQTRIMEL…QRQQLQALSE (166 aa)). N-linked (GlcNAc...) (complex) asparagine glycosylation is present at Asn109. Asn144 is a glycosylation site (N-linked (GlcNAc...) asparagine). A disordered region spans residues 178–401 (TKKGNEAVAS…DQREKRNHTL (224 aa)). The residue at position 187 (Ser187) is a Phosphoserine. Residues 228 to 238 (LGNSKSQTPAP) are compositionally biased toward polar residues. 2 stretches are compositionally biased toward basic and acidic residues: residues 244–255 (LDSKRQVEKEET) and 264–285 (EPQR…DRPV). Over residues 286 to 295 (GGRGFGGAGE) the composition is skewed to gly residues. Residues 298 to 312 (QTPQVQAALSVSQEN) are compositionally biased toward polar residues. Ser309 bears the Phosphoserine; by FAM20C mark. The span at 350 to 360 (DYNMDENEAES) shows a compositional bias: acidic residues. A compositionally biased stretch (basic and acidic residues) spans 381–395 (EDQKRDTINLLDQRE). A glycan (N-linked (GlcNAc...) asparagine) is linked at Asn398.

This sequence belongs to the GOLM family. As to quaternary structure, interacts with DYM. Post-translationally, glycosylated. Phosphorylation sites are present in the extracellular medium. In terms of tissue distribution, widely expressed. Highly expressed in colon, prostate, trachea and stomach. Expressed at lower level in testis, muscle, lymphoid tissues, white blood cells and spleen. Predominantly expressed by cells of the epithelial lineage. Expressed at low level in normal liver. Expression significantly increases in virus (HBV, HCV) infected liver. Expression does not increase in liver disease due to non-viral causes (alcohol-induced liver disease, autoimmune hepatitis). Increased expression in hepatocytes appears to be a general feature of advanced liver disease. In liver tissue from patients with adult giant-cell hepatitis (GCH), it is strongly expressed in hepatocytes-derived syncytial giant cells. Constitutively expressed by biliary epithelial cells but not by hepatocytes.

Its subcellular location is the golgi apparatus. The protein localises to the cis-Golgi network membrane. Functionally, unknown. Cellular response protein to viral infection. The sequence is that of Golgi membrane protein 1 (GOLM1) from Homo sapiens (Human).